Here is a 162-residue protein sequence, read N- to C-terminus: 3-isopropylmalate dehydratase small subunit (162 aa).

Belongs to the LeuD family. LeuD type 2 subfamily. Heterodimer of LeuC and LeuD.

It catalyses the reaction (2R,3S)-3-isopropylmalate = (2S)-2-isopropylmalate. It participates in amino-acid biosynthesis; L-leucine biosynthesis; L-leucine from 3-methyl-2-oxobutanoate: step 2/4. Its function is as follows. Catalyzes the isomerization between 2-isopropylmalate and 3-isopropylmalate, via the formation of 2-isopropylmaleate. In Pyrobaculum neutrophilum (strain DSM 2338 / JCM 9278 / NBRC 100436 / V24Sta) (Thermoproteus neutrophilus), this protein is 3-isopropylmalate dehydratase small subunit.